The primary structure comprises 460 residues: MQKTYLWALVSLLASSLVDARSAVFDQTPLDIGGSDDSFDSIARIDPNSNDLLKSEMDKVIASSELLSLHRALVEIKSISDNEQAVGGFLMDYLYSKNFTVEKQFVDYDDPTGKPIRTNRRFNIYAYPGNSASPGIILTSHIDTVPPFIPYSLSHPEPASFKREDILISGRGTVDDKASVACQVIAAMDHLEKHPDIPIGLLFVVSEEVGGRGMSTFSNSRLNSGTYHTIIFGEPTERALVAGHKGMVSFTIRVHGKPAHSGYPWLGRSAVSEMLPILTEVDRLGDIPVSQGGLPSSEKYGRTTLNIGFMSGGVAANVVAEEAVANVAVRLAAGDPEDAKDIIFRAIRNAATKHRKDATVVISNGLERPKGDIEVIFGLEAYGVVDIDADVDGFNVTTVNYGTDIPHWKIYGDNVKRYLYGPGTIFVAHGKNEALTVGELEAGLEGYKTLVAKAAERERS.

The first 22 residues, 1-22, serve as a signal peptide directing secretion; sequence MQKTYLWALVSLLASSLVDARS. N98 is a glycosylation site (N-linked (GlcNAc...) asparagine). D175 serves as a coordination point for Zn(2+). Catalysis depends on E207, which acts as the Proton acceptor. E208 serves as a coordination point for Zn(2+). N395 is a glycosylation site (N-linked (GlcNAc...) asparagine).

It belongs to the peptidase M20A family. The cofactor is Zn(2+).

Its subcellular location is the secreted. The protein is Probable carboxypeptidase TRV_02791 of Trichophyton verrucosum (strain HKI 0517).